The chain runs to 572 residues: MALTISRAQYVATYGPTVGDKVRLGDTNLWATIEQDLLTKGDECKFGGGKSVRDGMAQSGTATRDNPNVLDFVITNVMIIDAKLGIIKADIGIRDGRIVGIGQAGNPDTMDNVTPNMIIGASTEVHNGAHLIATAGGIDTHIHFICPQQAQHAIESGVTTLIGGGTGPADGTHATTCTPGAWYMERMFQAAEALPVNVGFFGKGNCSTLDPLREQIEAGALGLKIHEDWGATPAVIDSALKVADEMDIQVAIHTDTLNESGFLEDTMKAIDGRVIHTFHTEGAGGGHAPDIIKAAMYSNVLPASTNPTRPFTKNTIDEHLDMLMVCHHLDKRVPEDVAFADSRIRPETIAAEDILHDMGVFSIMSSDSQAMGRIGEVVIRTWQTADKMKMQRGELGNEGNDNFRIKRYIAKYTINPAIAHGIAEHIGSLEVGKIADIVLWKPMFFGVKPEVVIKKGFISYAKMGDPNASIPTPQPVFYRPMYGAQGLATAQTAVFFVSQAAEKADIRAKFGLHKETIAVKGCRNVGKKDLVHNDVTPNITVDAERYEVRVDGELITCEPVDSVPLGQRYFLF.

The Urease domain maps to 136-572; it reads GGIDTHIHFI…VPLGQRYFLF (437 aa). Ni(2+)-binding residues include His-141, His-143, and Lys-224. Position 224 is an N6-carboxylysine (Lys-224). Residue His-226 coordinates substrate. Ni(2+) contacts are provided by His-253 and His-279. The active-site Proton donor is His-327. Asp-367 lines the Ni(2+) pocket.

This sequence belongs to the metallo-dependent hydrolases superfamily. Urease alpha subunit family. Heterotrimer of UreA (gamma), UreB (beta) and UreC (alpha) subunits. Three heterotrimers associate to form the active enzyme. Requires Ni cation as cofactor. Post-translationally, carboxylation allows a single lysine to coordinate two nickel ions.

The protein localises to the cytoplasm. The catalysed reaction is urea + 2 H2O + H(+) = hydrogencarbonate + 2 NH4(+). Its pathway is nitrogen metabolism; urea degradation; CO(2) and NH(3) from urea (urease route): step 1/1. The protein is Urease subunit alpha of Haemophilus influenzae (strain ATCC 51907 / DSM 11121 / KW20 / Rd).